A 491-amino-acid polypeptide reads, in one-letter code: UDP-N-acetylmuramate--L-alanine ligase (491 aa).

126-132 (GTHGKTT) is a binding site for ATP.

It belongs to the MurCDEF family.

The protein localises to the cytoplasm. It catalyses the reaction UDP-N-acetyl-alpha-D-muramate + L-alanine + ATP = UDP-N-acetyl-alpha-D-muramoyl-L-alanine + ADP + phosphate + H(+). Its pathway is cell wall biogenesis; peptidoglycan biosynthesis. Functionally, cell wall formation. The polypeptide is UDP-N-acetylmuramate--L-alanine ligase (Salmonella agona (strain SL483)).